Reading from the N-terminus, the 269-residue chain is Sororin (269 aa).

Disordered stretches follow at residues 1–39 (MSEG…IMKR), 56–110 (VNTG…PKIN), and 146–169 (SLNS…STPN). Positions 57–66 (NTGSQSTPKV) are enriched in polar residues. Positions 85–87 (KEN) match the KEN box motif. Residues 146–155 (SLNSSSSLYS) are compositionally biased toward low complexity. The FGF motif motif lies at 180–182 (FGF). Residues 247–269 (LDEWAAFMNAEFEEAEKFDLTVE) are C-terminal Sororin domain.

It belongs to the sororin family. As to quaternary structure, interacts with the APC/C complex. Interacts with the chromatin-bound cohesin complex; the interaction is indirect, occurs after DNA replication and requires acetylation of the cohesin component smc3. Interacts (via the FGF motif) with pds5a and pds5b; the interaction is direct and prevents the interaction of pds5a with wapl. Post-translationally, ubiquitinated by the APC/C complex in G1, leading to its degradation.

Its subcellular location is the nucleus. It is found in the chromosome. It localises to the cytoplasm. Its function is as follows. Regulator of sister chromatid cohesion in mitosis stabilizing cohesin complex association with chromatin. May antagonize the action of wapl which stimulates cohesin dissociation from chromatin. Cohesion ensures that chromosome partitioning is accurate in both meiotic and mitotic cells and plays an important role in DNA repair. Required for efficient DNA double-stranded break repair. The sequence is that of Sororin (cdca5-a) from Xenopus laevis (African clawed frog).